Here is a 330-residue protein sequence, read N- to C-terminus: Phenylalanine--tRNA ligase alpha subunit (330 aa).

E254 is a Mg(2+) binding site.

Belongs to the class-II aminoacyl-tRNA synthetase family. Phe-tRNA synthetase alpha subunit type 1 subfamily. Tetramer of two alpha and two beta subunits. The cofactor is Mg(2+).

It is found in the cytoplasm. The enzyme catalyses tRNA(Phe) + L-phenylalanine + ATP = L-phenylalanyl-tRNA(Phe) + AMP + diphosphate + H(+). In Neisseria meningitidis serogroup B (strain ATCC BAA-335 / MC58), this protein is Phenylalanine--tRNA ligase alpha subunit (pheS).